The primary structure comprises 471 residues: Ribulose bisphosphate carboxylase large chain (471 aa).

Substrate contacts are provided by asparagine 115 and threonine 165. Lysine 167 functions as the Proton acceptor in the catalytic mechanism. Residue lysine 169 coordinates substrate. Residues lysine 193, aspartate 195, and glutamate 196 each coordinate Mg(2+). N6-carboxylysine is present on lysine 193. Catalysis depends on histidine 286, which acts as the Proton acceptor. Substrate is bound by residues arginine 287, histidine 319, and serine 371.

The protein belongs to the RuBisCO large chain family. Type I subfamily. In terms of assembly, heterohexadecamer of 8 large chains and 8 small chains. It depends on Mg(2+) as a cofactor.

It carries out the reaction 2 (2R)-3-phosphoglycerate + 2 H(+) = D-ribulose 1,5-bisphosphate + CO2 + H2O. The catalysed reaction is D-ribulose 1,5-bisphosphate + O2 = 2-phosphoglycolate + (2R)-3-phosphoglycerate + 2 H(+). RuBisCO catalyzes two reactions: the carboxylation of D-ribulose 1,5-bisphosphate, the primary event in carbon dioxide fixation, as well as the oxidative fragmentation of the pentose substrate. Both reactions occur simultaneously and in competition at the same active site. The polypeptide is Ribulose bisphosphate carboxylase large chain (Alvinoconcha hessleri symbiotic bacterium).